The primary structure comprises 427 residues: Dihydrofolate synthetase (427 aa).

ATP is bound at residue 34-37 (GKGS). Mg(2+)-binding residues include Glu-123 and His-153. 2 residues coordinate ATP: Arg-275 and Asp-296.

The protein belongs to the folylpolyglutamate synthase family.

The protein localises to the cytoplasm. It catalyses the reaction 7,8-dihydropteroate + L-glutamate + ATP = 7,8-dihydrofolate + ADP + phosphate + H(+). Its pathway is cofactor biosynthesis; tetrahydrofolylpolyglutamate biosynthesis. In terms of biological role, glutamate-adding enzyme which catalyzes the binding of the first glutamyl side chain to dihydropteroate. Leads to the de nove synthesis of tetrahydrofolate. This is Dihydrofolate synthetase (FOL3) from Saccharomyces cerevisiae (strain ATCC 204508 / S288c) (Baker's yeast).